The primary structure comprises 260 residues: ATP synthase subunit a (260 aa).

6 consecutive transmembrane segments (helical) span residues 37 to 57, 95 to 115, 125 to 145, 154 to 174, 191 to 211, and 233 to 253; these read FTNA…FMTL, FFPF…IGMF, IVVT…TGFV, VFVP…IEII, MLAG…FMTM, and EFLV…MYLH.

It belongs to the ATPase A chain family. In terms of assembly, F-type ATPases have 2 components, CF(1) - the catalytic core - and CF(0) - the membrane proton channel. CF(1) has five subunits: alpha(3), beta(3), gamma(1), delta(1), epsilon(1). CF(0) has three main subunits: a(1), b(2) and c(9-12). The alpha and beta chains form an alternating ring which encloses part of the gamma chain. CF(1) is attached to CF(0) by a central stalk formed by the gamma and epsilon chains, while a peripheral stalk is formed by the delta and b chains.

It localises to the cell inner membrane. Functionally, key component of the proton channel; it plays a direct role in the translocation of protons across the membrane. The sequence is that of ATP synthase subunit a from Parvibaculum lavamentivorans (strain DS-1 / DSM 13023 / NCIMB 13966).